A 366-amino-acid chain; its full sequence is 5-hydroxytryptamine receptor 1F (366 aa).

Over 1–24 the chain is Extracellular; that stretch reads MDFLNSSDQNLTSEELLNRMPSKI. 2 N-linked (GlcNAc...) asparagine glycosylation sites follow: asparagine 5 and asparagine 10. A helical transmembrane segment spans residues 25-49; sequence LVSLTLSGLALMTTTINCLVITAII. Topologically, residues 50-59 are cytoplasmic; sequence VTRKLHHPAN. The helical transmembrane segment at 60-81 threads the bilayer; the sequence is YLICSLAVTDFLVAVLVMPFSI. Residues 82–96 are Extracellular-facing; the sequence is VYIVRESWIMGQGLC. Residues cysteine 96 and cysteine 172 are joined by a disulfide bond. A helical membrane pass occupies residues 97–119; it reads DLWLSVDIICCTCSILHLSAIAL. Serotonin is bound by residues aspartate 103 and cysteine 107. A DRY motif; important for ligand-induced conformation changes motif is present at residues 120–122; it reads DRY. The Cytoplasmic portion of the chain corresponds to 120-139; it reads DRYRAITDAVEYARKRTPRH. The helical transmembrane segment at 140–159 threads the bilayer; sequence AGITITTVWVISVFISVPPL. Over 160–178 the chain is Extracellular; it reads FWRHQGNSRDDQCIIKHDH. The helical transmembrane segment at 179-202 threads the bilayer; sequence IVSTIYSTFGAFYIPLVLILILYY. At 203–291 the chain is on the cytoplasmic side; the sequence is KIYRAARTLY…KISGTRERKA (89 aa). Residues 292–315 traverse the membrane as a helical segment; that stretch reads ATTLGLILGAFVICWLPFFVKELV. Residues 316–327 lie on the Extracellular side of the membrane; it reads VNICEKCKISEE. The chain crosses the membrane as a helical span at residues 328 to 350; sequence MSNFLAWLGYLNSLINPLIYTIF. Positions 343–347 match the NPxxY motif; important for ligand-induced conformation changes and signaling motif; sequence NPLIY. Residues 351–366 are Cytoplasmic-facing; it reads NEDFKKAFQKLVRCRN.

This sequence belongs to the G-protein coupled receptor 1 family.

The protein localises to the cell membrane. In terms of biological role, G-protein coupled receptor for 5-hydroxytryptamine (serotonin). Also functions as a receptor for various alkaloids and psychoactive substances. Ligand binding causes a conformation change that triggers signaling via guanine nucleotide-binding proteins (G proteins) and modulates the activity of downstream effectors, such as adenylate cyclase. HTR1F is coupled to G(i)/G(o) G alpha proteins and mediates inhibitory neurotransmission by inhibiting adenylate cyclase activity. The chain is 5-hydroxytryptamine receptor 1F (Htr1f) from Rattus norvegicus (Rat).